The sequence spans 402 residues: Sulfate adenylyltransferase (402 aa).

The protein belongs to the sulfate adenylyltransferase family.

The catalysed reaction is sulfate + ATP + H(+) = adenosine 5'-phosphosulfate + diphosphate. It functions in the pathway sulfur metabolism; hydrogen sulfide biosynthesis; sulfite from sulfate: step 1/3. The chain is Sulfate adenylyltransferase from Thiobacillus denitrificans (strain ATCC 25259 / T1).